We begin with the raw amino-acid sequence, 550 residues long: Mitochondrial distribution and morphology protein 12 (550 aa).

The region spanning 1–550 (MSIELNWETL…VYPSFWTFLV (550 aa)) is the SMP-LTD domain. 3 disordered regions span residues 62 to 168 (ITDP…PQDL), 218 to 356 (PPQW…TKYR), and 474 to 493 (TLAS…GGNT). The segment covering 69 to 90 (FYEEDPDVDYDDEDEDVEETHD) has biased composition (acidic residues). A compositionally biased stretch (low complexity) spans 125–140 (VASSSSSSVGRGSAPR). Composition is skewed to polar residues over residues 148–157 (PTKSNININT), 251–269 (PSHS…QTAS), 278–289 (TPTSFLRSGQQT), and 296–323 (VSTL…TAQE).

The protein belongs to the MDM12 family. In terms of assembly, component of the ER-mitochondria encounter structure (ERMES) or MDM complex, composed of MMM1, MDM10, MDM12 and MDM34. An MMM1 homodimer associates with one molecule of MDM12 on each side in a pairwise head-to-tail manner, and the SMP-LTD domains of MMM1 and MDM12 generate a continuous hydrophobic tunnel for phospholipid trafficking.

The protein resides in the mitochondrion outer membrane. The protein localises to the endoplasmic reticulum membrane. In terms of biological role, component of the ERMES/MDM complex, which serves as a molecular tether to connect the endoplasmic reticulum (ER) and mitochondria. Components of this complex are involved in the control of mitochondrial shape and protein biogenesis, and function in nonvesicular lipid trafficking between the ER and mitochondria. MDM12 is required for the interaction of the ER-resident membrane protein MMM1 and the outer mitochondrial membrane-resident beta-barrel protein MDM10. The MDM12-MMM1 subcomplex functions in the major beta-barrel assembly pathway that is responsible for biogenesis of all mitochondrial outer membrane beta-barrel proteins, and acts in a late step after the SAM complex. The MDM10-MDM12-MMM1 subcomplex further acts in the TOM40-specific pathway after the action of the MDM12-MMM1 complex. Essential for establishing and maintaining the structure of mitochondria and maintenance of mtDNA nucleoids. The sequence is that of Mitochondrial distribution and morphology protein 12 from Pyricularia oryzae (strain 70-15 / ATCC MYA-4617 / FGSC 8958) (Rice blast fungus).